We begin with the raw amino-acid sequence, 261 residues long: Protein unc-50 homolog (261 aa).

Helical transmembrane passes span 37–57 (IFHYPQMDIEYTFWIMFYLCF), 82–102 (AFAVILVFFMAIASMSYAITF), 113–133 (VMFWAVFVDFITVGLLIATIG), 166–186 (SFFPLFIILYVVQFFLLPILL), 190–210 (LFAAILSNTLYIIGFSYYYYV), and 225–245 (VVFLYPIGILFALYIVSVVMG).

Belongs to the unc-50 family.

It is found in the membrane. This is Protein unc-50 homolog from Dictyostelium discoideum (Social amoeba).